We begin with the raw amino-acid sequence, 455 residues long: tRNA-2-methylthio-N(6)-dimethylallyladenosine synthase (455 aa).

An MTTase N-terminal domain is found at 10-130; it reads RKVFIKTYGC…LPDALKRVRR (121 aa). Residues Cys19, Cys55, Cys93, Cys171, Cys175, and Cys178 each coordinate [4Fe-4S] cluster. The Radical SAM core domain maps to 157-389; the sequence is RSRGVTAFLT…QALLLRQQKE (233 aa). In terms of domain architecture, TRAM spans 392–454; it reads ESLVGKTMDV…PNSLFAEVAG (63 aa).

The protein belongs to the methylthiotransferase family. MiaB subfamily. Monomer. Requires [4Fe-4S] cluster as cofactor.

It is found in the cytoplasm. It carries out the reaction N(6)-dimethylallyladenosine(37) in tRNA + (sulfur carrier)-SH + AH2 + 2 S-adenosyl-L-methionine = 2-methylsulfanyl-N(6)-dimethylallyladenosine(37) in tRNA + (sulfur carrier)-H + 5'-deoxyadenosine + L-methionine + A + S-adenosyl-L-homocysteine + 2 H(+). Catalyzes the methylthiolation of N6-(dimethylallyl)adenosine (i(6)A), leading to the formation of 2-methylthio-N6-(dimethylallyl)adenosine (ms(2)i(6)A) at position 37 in tRNAs that read codons beginning with uridine. This is tRNA-2-methylthio-N(6)-dimethylallyladenosine synthase from Agrobacterium fabrum (strain C58 / ATCC 33970) (Agrobacterium tumefaciens (strain C58)).